The sequence spans 255 residues: Snake venom serine protease HS112 (255 aa).

The signal sequence occupies residues 1-18 (MVLIRVIANLLILQLSYA). Residues 19-24 (QKSSEL) constitute a propeptide that is removed on maturation. In terms of domain architecture, Peptidase S1 spans 25-246 (VIGGDECDIN…YLPWIQSIIA (222 aa)). 6 cysteine pairs are disulfide-bonded: Cys31-Cys162, Cys49-Cys65, Cys97-Cys253, Cys141-Cys207, Cys173-Cys186, and Cys197-Cys222. Catalysis depends on charge relay system residues His64 and Asp109. Asn169 carries an N-linked (GlcNAc...) asparagine glycan. Residue Ser201 is the Charge relay system of the active site. Asn248 carries an N-linked (GlcNAc...) asparagine glycan.

The protein belongs to the peptidase S1 family. Snake venom subfamily. As to quaternary structure, monomer. In terms of tissue distribution, expressed by the venom gland.

Its subcellular location is the secreted. Functionally, snake venom serine protease that may act in the hemostasis system of the prey. This is Snake venom serine protease HS112 from Bothrops jararaca (Jararaca).